Reading from the N-terminus, the 196-residue chain is Imidazoleglycerol-phosphate dehydratase (196 aa).

Belongs to the imidazoleglycerol-phosphate dehydratase family.

The protein resides in the cytoplasm. It carries out the reaction D-erythro-1-(imidazol-4-yl)glycerol 3-phosphate = 3-(imidazol-4-yl)-2-oxopropyl phosphate + H2O. Its pathway is amino-acid biosynthesis; L-histidine biosynthesis; L-histidine from 5-phospho-alpha-D-ribose 1-diphosphate: step 6/9. This is Imidazoleglycerol-phosphate dehydratase from Desulforamulus reducens (strain ATCC BAA-1160 / DSM 100696 / MI-1) (Desulfotomaculum reducens).